Here is a 632-residue protein sequence, read N- to C-terminus: MRNALASFGQIVLAAVVASGVAAVSLIAIARVHWPAFPSSNQLHALTTVGQVGCLTGLLAVGGVWQAGRFRRLAQLGGLVFVSAFTVVTLGMPLGATKLYLFGISVDQQFRTEYLTRLTDSAALQDMTYLGLPPFYPPGWFWIGGRVAALTGTPAWEIFKPWAITSITIAVAITLVLWWQMIRFEYALLVTIATAAVTLVYSSPEPYAAMITVLLPPALVLTWSGLRAAEREADRTLGNKRGWATVVGAGIFLGFAATWYTLLLAYTAFTVVLMTLLLATALCRRAGFRATFDPLRRLAGIVVIAAAIGAITWLPFLARAAHDPVSDTGSAQHYLPADGAELAFPMLQFSLLGMICMLGTLWLIVRTSSSVRASALMISVLAVYLWSLLSILTTLARTTLLSFRLQPTLTVLLVTAGVFGFIETAQSLAKHNRAVLSVASAIGLAGAIAFSQDIPNVLRPDLTIAYTDTDGHGQRGDRRPPGSEKYYWAIDEAVLHITGKPRDQTVVLTADYSFLAYYPYWGFQGLTSHYANPLAQFDLRAAQIQQWSRLTTASELIHALDTLPWPPPTVFVMRHGAGNTYTLRLAKNVYPNQPNVRRYTVDLPAALFADQRFAVQDIGPFVLAIRKPMGNA.

Transmembrane regions (helical) follow at residues 10–30, 45–65, 76–96, 162–182, 184–204, 206–226, 242–259, 263–282, 298–318, 344–364, 375–395, 409–429, and 434–454; these read QIVLAAVVASGVAAVSLIAIA, ALTTVGQVGCLTGLLAVGGVW, LGGLVFVSAFTVVTLGMPLGA, WAITSITIAVAITLVLWWQMI, FEYALLVTIATAAVTLVYSSP, PYAAMITVLLPPALVLTWSGL, GWATVVGAGIFLGFAATW, LLAYTAFTVVLMTLLLATAL, LAGIVVIAAAIGAITWLPFLA, FPMLQFSLLGMICMLGTLWLI, ALMISVLAVYLWSLLSILTTL, LTVLLVTAGVFGFIETAQSLA, and AVLSVASAIGLAGAIAFSQDI. Residues 455 to 632 lie on the Extracellular side of the membrane; sequence PNVLRPDLTI…LAIRKPMGNA (178 aa).

This sequence belongs to the glycosyltransferase 85 family.

The protein localises to the cell membrane. The catalysed reaction is Adds an alpha-D-arabinofuranosyl group from trans,octacis-decaprenylphospho-beta-D-arabinofuranose at the 5-O-position of the eighth, tenth and twelfth galactofuranose unit of the galactofuranan chain of [beta-D-galactofuranosyl-(1-&gt;5)-beta-D-galactofuranosyl-(1-&gt;6)]14-beta-D-galactofuranosyl-(1-&gt;5)-beta-D-galactofuranosyl-(1-&gt;4)-alpha-L-rhamnopyranosyl-(1-&gt;3)-N-acetyl-alpha-D-glucosaminyl-diphospho-trans,octacis-decaprenol.. The protein operates within cell wall biogenesis; cell wall polysaccharide biosynthesis. Its function is as follows. Involved in the biosynthesis of the arabinogalactan (AG) region of the mycolylarabinogalactan-peptidoglycan (mAGP) complex, an essential component of the mycobacterial cell wall. Catalyzes the addition of the first key arabinofuranosyl (Araf) residue from the sugar donor decaprenyl-phospho-arabinose (DPA) on the C-5 of a 6-linked galactofuranosyl (Galf) of the galactan domain, thus 'priming' the galactan for further elaboration by other arabinofuranosyltransferases. The protein is Galactan 5-O-arabinofuranosyltransferase of Mycobacterium leprae (strain TN).